The following is a 688-amino-acid chain: Lipase (688 aa).

A signal peptide spans 1-35 (MKTRQNKYSIRKFSVGASSILIAALLFMGGGSAQA). A disordered region spans residues 31 to 309 (GSAQAAEQQQ…KSAKQKQYKN (279 aa)). The propeptide at 36–302 (AEQQQDKGTV…KNEDQTNKSA (267 aa)) is removed in mature form. Residues 45 to 54 (VENSTTQSIG) are compositionally biased toward polar residues. Over residues 68-79 (NKNVNEKSNVNS) the composition is skewed to low complexity. 2 stretches are compositionally biased toward basic and acidic residues: residues 84–95 (ESLHNETPKNED) and 103–143 (SQND…KHAS). Positions 144-172 (ENNQTLHSKAAQSNEDVKTKPSQLDNTAA) are enriched in polar residues. Residues 173–183 (KQEDSQKENLS) are compositionally biased toward basic and acidic residues. Polar residues predominate over residues 184–211 (KQDTQSSKTTDLLRATAQNQSKDSQSTE). Residues 240 to 267 (SKEEPLKVDKQANPTTDKDKSSKNDKGS) show a composition bias toward basic and acidic residues. Polar residues predominate over residues 274–289 (LESNAVATTNKQSKQQ). S418 serves as the catalytic Nucleophile. D609 functions as the Charge relay system in the catalytic mechanism. D647 contacts Ca(2+). The active-site Charge relay system is the H648. Positions 650, 655, and 658 each coordinate Ca(2+).

The protein belongs to the AB hydrolase superfamily. Lipase family.

The protein localises to the secreted. It carries out the reaction a triacylglycerol + H2O = a diacylglycerol + a fatty acid + H(+). The chain is Lipase (lip) from Staphylococcus epidermidis (strain ATCC 12228 / FDA PCI 1200).